A 254-amino-acid polypeptide reads, in one-letter code: TLC domain-containing protein At5g14285 (254 aa).

The next 6 membrane-spanning stretches (helical) occupy residues 12 to 32 (DLPI…FIVF), 45 to 65 (SCLI…RAVF), 82 to 101 (TVLD…YIVF), 124 to 144 (FLVF…EVTS), 172 to 192 (LSPP…PLFF), and 211 to 231 (WLWI…ILWI). One can recognise a TLC domain in the interval 38 to 248 (QIRPEASSCL…FSERKANKIR (211 aa)).

The protein resides in the membrane. The chain is TLC domain-containing protein At5g14285 from Arabidopsis thaliana (Mouse-ear cress).